The chain runs to 467 residues: Siroheme synthase (467 aa).

Residues 1 to 203 are precorrin-2 dehydrogenase /sirohydrochlorin ferrochelatase; the sequence is METLPIFMKL…GQEEAARHAM (203 aa). Residues 22–23 and 43–44 contribute to the NAD(+) site; these read EI and PE. Ser-128 bears the Phosphoserine mark. The interval 216 to 467 is uroporphyrinogen-III C-methyltransferase; sequence GEVYLVGGGP…APSPEVVSAG (252 aa). Pro-225 lines the S-adenosyl-L-methionine pocket. Residue Asp-248 is the Proton acceptor of the active site. Residue Lys-270 is the Proton donor of the active site. S-adenosyl-L-methionine-binding positions include 301 to 303, Ile-306, 331 to 332, Met-383, and Gly-412; these read GGD and TA.

It in the N-terminal section; belongs to the precorrin-2 dehydrogenase / sirohydrochlorin ferrochelatase family. The protein in the C-terminal section; belongs to the precorrin methyltransferase family.

The enzyme catalyses uroporphyrinogen III + 2 S-adenosyl-L-methionine = precorrin-2 + 2 S-adenosyl-L-homocysteine + H(+). It carries out the reaction precorrin-2 + NAD(+) = sirohydrochlorin + NADH + 2 H(+). The catalysed reaction is siroheme + 2 H(+) = sirohydrochlorin + Fe(2+). The protein operates within cofactor biosynthesis; adenosylcobalamin biosynthesis; precorrin-2 from uroporphyrinogen III: step 1/1. It functions in the pathway cofactor biosynthesis; adenosylcobalamin biosynthesis; sirohydrochlorin from precorrin-2: step 1/1. Its pathway is porphyrin-containing compound metabolism; siroheme biosynthesis; precorrin-2 from uroporphyrinogen III: step 1/1. It participates in porphyrin-containing compound metabolism; siroheme biosynthesis; siroheme from sirohydrochlorin: step 1/1. The protein operates within porphyrin-containing compound metabolism; siroheme biosynthesis; sirohydrochlorin from precorrin-2: step 1/1. Functionally, multifunctional enzyme that catalyzes the SAM-dependent methylations of uroporphyrinogen III at position C-2 and C-7 to form precorrin-2 via precorrin-1. Then it catalyzes the NAD-dependent ring dehydrogenation of precorrin-2 to yield sirohydrochlorin. Finally, it catalyzes the ferrochelation of sirohydrochlorin to yield siroheme. This is Siroheme synthase from Methylobacillus flagellatus (strain ATCC 51484 / DSM 6875 / VKM B-1610 / KT).